A 1083-amino-acid chain; its full sequence is Ubiquitin carboxyl-terminal hydrolase 28 (1083 aa).

Residues 60–82 form a disordered region; sequence DQRVKEPSHDTAATEPSEVEESA. Serine 67 is modified (phosphoserine). The 20-residue stretch at 97-116 folds into the UIM domain; it reads DNKDDLQAAIALSLLESPNI. Lysine 99 is covalently cross-linked (Glycyl lysine isopeptide (Lys-Gly) (interchain with G-Cter in SUMO2)). Residues 162 to 656 form the USP domain; that stretch reads VGLKNVGNTC…SAYCLMYIND (495 aa). The active-site Nucleophile is cysteine 171. Residue serine 376 is modified to Phosphoserine. The interval 483-539 is disordered; it reads DLTAKESSSPKSCSQNAEGSFSSPEDALPNSEVMNGPFTSPHSSLEMPAPPPAPRTV. Over residues 487–505 the composition is skewed to polar residues; the sequence is KESSSPKSCSQNAEGSFSS. Serine 556 is modified (phosphoserine). The Proton acceptor role is filled by histidine 606. The disordered stretch occupies residues 703–728; that stretch reads EEQSCKIPQMESSPNSSSQDFSTSQE. A compositionally biased stretch (low complexity) spans 714–728; sequence SSPNSSSQDFSTSQE. Residue serine 720 is modified to Phosphoserine. At threonine 1054 the chain carries Phosphothreonine.

Belongs to the peptidase C19 family. USP28 subfamily. Interacts with ZNF304. Interacts with PRKD1. Interacts with TP53BP1. Interacts with FBXW7; following DNA damage, dissociates from FBXW7 leading to degradation of MYC. Post-translationally, degraded upon nickel ion level or hypoxia exposure. Phosphorylated upon DNA damage at Ser-67 and Ser-720, by ATM or ATR. Phosphorylated by PRKD1.

Its subcellular location is the nucleus. The protein resides in the nucleoplasm. The enzyme catalyses Thiol-dependent hydrolysis of ester, thioester, amide, peptide and isopeptide bonds formed by the C-terminal Gly of ubiquitin (a 76-residue protein attached to proteins as an intracellular targeting signal).. Functionally, deubiquitinase involved in DNA damage response checkpoint and MYC proto-oncogene stability. Involved in DNA damage induced apoptosis by specifically deubiquitinating proteins of the DNA damage pathway such as CLSPN. Also involved in G2 DNA damage checkpoint, by deubiquitinating CLSPN, and preventing its degradation by the anaphase promoting complex/cyclosome (APC/C). In contrast, it does not deubiquitinate PLK1. Specifically deubiquitinates MYC in the nucleoplasm, leading to prevent MYC degradation by the proteasome: acts by specifically interacting with FBXW7 (FBW7alpha) in the nucleoplasm and counteracting ubiquitination of MYC by the SCF(FBXW7) complex. Deubiquitinates ZNF304, hence preventing ZNF304 degradation by the proteasome and leading to the activated KRAS-mediated promoter hypermethylation and transcriptional silencing of tumor suppressor genes (TSGs) in a subset of colorectal cancers (CRC) cells. The protein is Ubiquitin carboxyl-terminal hydrolase 28 (Usp28) of Rattus norvegicus (Rat).